The chain runs to 469 residues: Probable Xaa-Pro aminopeptidase PEPP (469 aa).

The Mn(2+) site is built by Asp-265, Asp-276, Glu-399, and Glu-439.

Belongs to the peptidase M24B family. The cofactor is Mn(2+).

It carries out the reaction Release of any N-terminal amino acid, including proline, that is linked to proline, even from a dipeptide or tripeptide.. Its function is as follows. Catalyzes the removal of a penultimate prolyl residue from the N-termini of peptides. The protein is Probable Xaa-Pro aminopeptidase PEPP (PEPP) of Coccidioides posadasii (strain RMSCC 757 / Silveira) (Valley fever fungus).